Here is a 145-residue protein sequence, read N- to C-terminus: RING-H2 finger protein ATL18 (145 aa).

The N-terminal stretch at 1–29 (MISMLFPRSPLCTAAIVFYTCVCIPLGRL) is a signal peptide. The segment at 62-105 (CPICLVEFEAEDAVTHLPRCAHLFHINCIEPWLLRGHLTCPLCR) adopts an RING-type; atypical zinc-finger fold. Residues 125 to 145 (STLYLSIFFFFCIFLHLLGYL) traverse the membrane as a helical segment.

Belongs to the RING-type zinc finger family. ATL subfamily.

The protein localises to the membrane. The catalysed reaction is S-ubiquitinyl-[E2 ubiquitin-conjugating enzyme]-L-cysteine + [acceptor protein]-L-lysine = [E2 ubiquitin-conjugating enzyme]-L-cysteine + N(6)-ubiquitinyl-[acceptor protein]-L-lysine.. The protein operates within protein modification; protein ubiquitination. The chain is RING-H2 finger protein ATL18 (ATL18) from Arabidopsis thaliana (Mouse-ear cress).